The following is a 297-amino-acid chain: Dipicolinate synthase subunit A (297 aa).

NADP(+) is bound by residues 164–165, Arg-185, Thr-203, 242–244, and 264–267; these read RT, LAS, and APGL.

In terms of assembly, dipicolinate synthase likely consists of DpaA and DpaB, since both proteins are required for DPA synthesis.

The enzyme catalyses (S)-2,3-dihydrodipicolinate + NADP(+) = dipicolinate + NADPH + H(+). Together with DpaB, catalyzes the conversion of dihydrodipicolinate to dipicolinate (DPA), which constitutes up to 10% of the dry weight of the spore. This Bacillus subtilis (strain 168) protein is Dipicolinate synthase subunit A (dpaA).